We begin with the raw amino-acid sequence, 274 residues long: Putative pyruvate, phosphate dikinase regulatory protein (274 aa).

153 to 160 (GISRTSKT) contacts ADP.

Belongs to the pyruvate, phosphate/water dikinase regulatory protein family. PDRP subfamily.

It catalyses the reaction N(tele)-phospho-L-histidyl/L-threonyl-[pyruvate, phosphate dikinase] + ADP = N(tele)-phospho-L-histidyl/O-phospho-L-threonyl-[pyruvate, phosphate dikinase] + AMP + H(+). The catalysed reaction is N(tele)-phospho-L-histidyl/O-phospho-L-threonyl-[pyruvate, phosphate dikinase] + phosphate + H(+) = N(tele)-phospho-L-histidyl/L-threonyl-[pyruvate, phosphate dikinase] + diphosphate. Bifunctional serine/threonine kinase and phosphorylase involved in the regulation of the pyruvate, phosphate dikinase (PPDK) by catalyzing its phosphorylation/dephosphorylation. In Bartonella tribocorum (strain CIP 105476 / IBS 506), this protein is Putative pyruvate, phosphate dikinase regulatory protein.